The following is a 909-amino-acid chain: Cutinase transcription factor 1 alpha (909 aa).

The tract at residues 1-51 (MSSGDAPPQAQPQPHQQEQPNQRQSSTPAPSAAPVPPAPSTSTSNSAGGVS) is disordered. Low complexity predominate over residues 12-30 (PQPHQQEQPNQRQSSTPAP). The segment at residues 61–90 (CETCHARKVRCDAASLGVPCTNCVAFQIEC) is a DNA-binding region (zn(2)-C6 fungal-type). 3 disordered regions span residues 95–159 (PKRK…EAQA), 651–757 (AEGK…SFSV), and 841–878 (LPQG…QGQA). Positions 110–119 (KDSDSDRGDG) are enriched in basic and acidic residues. Over residues 142 to 156 (VFHSHNGTPPTTLTE) the composition is skewed to polar residues. A compositionally biased stretch (basic and acidic residues) spans 669–683 (QHSRQQEAPKRKYDE). 3 stretches are compositionally biased toward polar residues: residues 704-717 (PQTP…TSSM), 737-755 (GGTN…NPSF), and 865-878 (SPDS…QGQA).

It is found in the nucleus. This is Cutinase transcription factor 1 alpha (CTF1-ALPHA) from Fusarium vanettenii (Neocosmospora pisi).